Reading from the N-terminus, the 254-residue chain is Segregation and condensation protein A (254 aa).

This sequence belongs to the ScpA family. In terms of assembly, component of a cohesin-like complex composed of ScpA, ScpB and the Smc homodimer, in which ScpA and ScpB bind to the head domain of Smc. The presence of the three proteins is required for the association of the complex with DNA.

Its subcellular location is the cytoplasm. In terms of biological role, participates in chromosomal partition during cell division. May act via the formation of a condensin-like complex containing Smc and ScpB that pull DNA away from mid-cell into both cell halves. This is Segregation and condensation protein A from Brevibacillus brevis (strain 47 / JCM 6285 / NBRC 100599).